A 540-amino-acid polypeptide reads, in one-letter code: Cytosolic carboxypeptidase 6 (540 aa).

The 272-residue stretch at 167 to 438 (YPYTYTRFQH…NVARTFLDYY (272 aa)) folds into the Peptidase M14 domain. Zn(2+) contacts are provided by histidine 230, glutamate 233, and histidine 328. Catalysis depends on glutamate 401, which acts as the Proton donor/acceptor.

It belongs to the peptidase M14 family. Interacts with MYLK. The cofactor is Zn(2+). As to expression, widely expressed. Expressed abundantly in testis, pituitary and brain and to a lower extent in eye, stomach, adrenal and kidney. In brain, expressed at low level in cerebellum as compared to cortex.

The protein localises to the cytoplasm. Its subcellular location is the cytosol. The protein resides in the cytoskeleton. It localises to the microtubule organizing center. It is found in the centrosome. The protein localises to the centriole. Its subcellular location is the golgi apparatus. The protein resides in the cilium basal body. It carries out the reaction (L-glutamyl)(n+1)-gamma-L-glutamyl-L-glutamyl-[protein] + H2O = (L-glutamyl)(n)-gamma-L-glutamyl-L-glutamyl-[protein] + L-glutamate. The catalysed reaction is C-terminal L-alpha-aminoacyl-L-glutamyl-L-glutamyl-[tubulin] + H2O = C-terminal L-alpha-aminoacyl-L-glutamyl-[tubulin] + L-glutamate. In terms of biological role, metallocarboxypeptidase that mediates protein deglutamylation of tubulin and non-tubulin target proteins. Catalyzes the removal of polyglutamate side chains present on the gamma-carboxyl group of glutamate residues within the C-terminal tail of tubulin protein. Specifically cleaves tubulin long-side-chains, while it is not able to remove the branching point glutamate. Also catalyzes the removal of polyglutamate residues from the carboxy-terminus of non-tubulin proteins such as MYLK. Mediates the deglutamylation of nucleotidyltransferase CGAS, leading to CGAS antiviral defense response activation. Involved in KLF4 deglutamylation which promotes KLF4 proteasome-mediated degradation, thereby negatively regulating cell pluripotency maintenance and embryogenesis. This Mus musculus (Mouse) protein is Cytosolic carboxypeptidase 6.